Here is a 732-residue protein sequence, read N- to C-terminus: MQYSIEVNNQVEIFDLNKVAKQASGAVLLRVKNTVVLATVAREDVQVEEDFLPLTVQYIEKAYAAGKIPGGYVKRETKPGDFETLTARIIDRSLRPLFPKGYAYPTQIVVMVLSADPEVDLQVVSLNAASVALYLSDIPVNRPVCGVRVGYIDDKFVINPSNSELKQSAIDLYVAGTKDELLMIEMRSLPQQTTQLIPMVAIEPMIDPSLSDSMAQKQVMNEFSEDKMVEAIDFAGKAILRASSAYEEAFKEHKKEDAALELKPEIENENIAIYIDKFYKAEVKNAINQMAKSERASELGKIAKQISSDEVAQKEGWDEAVITNVLGKYKKKIVREQIINEGIRADGRGLEEVRPISIETNVLPNAHGSCLFTRGQTQALVVATLGTDSDAQMYDILTEKAPLVEKFMFNYNFPGFSVGEASPLKAPGRRELGHGNLAKRALAPSIDLASPYTIRVVSEILESNGSSSMASVCGGSLALRAAGVNTQKLVAGVAMGLIFEGEKHAVLTDIMGLEDHDGDMDFKVAGTSDGITALQMDIKLGGISLEVLKEALYQAKRGREHILALMTQADKNIEINEDVLPKLELFNVDPSKIVDIIGQAGKTIKEIIEKFEVSIDLDREKGEVKIAGGAKKNVDAAKDYIISITSKENSRSFGKKPFKHDKDRVKPTFNIGDEFTGSVKSVVDFGVFIELKDGVDGLLHISKIKSPLNVGDQVKVCVSEQKGNKISLSLVE.

Residues D515 and D521 each contribute to the Mg(2+) site. Positions 581 to 641 constitute a KH domain; the sequence is PKLELFNVDP…KNVDAAKDYI (61 aa). An S1 motif domain is found at 672–731; that stretch reads GDEFTGSVKSVVDFGVFIELKDGVDGLLHISKIKSPLNVGDQVKVCVSEQKGNKISLSLV.

It belongs to the polyribonucleotide nucleotidyltransferase family. It depends on Mg(2+) as a cofactor.

The protein resides in the cytoplasm. It catalyses the reaction RNA(n+1) + phosphate = RNA(n) + a ribonucleoside 5'-diphosphate. Functionally, involved in mRNA degradation. Catalyzes the phosphorolysis of single-stranded polyribonucleotides processively in the 3'- to 5'-direction. The sequence is that of Polyribonucleotide nucleotidyltransferase from Campylobacter concisus (strain 13826).